A 315-amino-acid polypeptide reads, in one-letter code: COMPASS component SWD3 (315 aa).

6 WD repeats span residues 53 to 93, 94 to 133, 136 to 178, 187 to 228, 238 to 278, and 285 to 315; these read SHAR…HTFI, GHTA…LMKT, AHSE…KTLT, NGVV…RTFQ, HHSC…LLQL, and HHSS…WRWV.

In terms of assembly, component of the Set1C/COMPASS complex which consists of SET1(2), BRE2(2), SPP1(2), SDC1(1), SHG1(1), SWD1(1), SWD2(1), and SWD3(1).

It localises to the nucleus. The protein resides in the chromosome. Its subcellular location is the telomere. Functionally, the COMPASS (Set1C) complex specifically mono-, di- and trimethylates histone H3 to form H3K4me1/2/3, which subsequently plays a role in telomere length maintenance and transcription elongation regulation. COMPASS recognizes ubiquitinated H2B on one face of the nucleosome which stimulates the methylation of H3 on the opposing face. SWD3/CPS30 establishes COMPASS trimethylation activity and may also serve as the anchor point to properly tether and space the other subunits. The protein is COMPASS component SWD3 of Saccharomyces cerevisiae (strain ATCC 204508 / S288c) (Baker's yeast).